Consider the following 157-residue polypeptide: Beta-defensin 125 (157 aa).

The N-terminal stretch at 1 to 20 (MNLLMLTFIICGLLTQVTKG) is a signal peptide. 3 disulfides stabilise this stretch: Cys27-Cys55, Cys35-Cys49, and Cys39-Cys56. Positions 109 to 157 (GETITPETNTPETTMPPSETTSSKTTMPPSETATSETMPPPSQTALTHN) are disordered. The span at 110 to 140 (ETITPETNTPETTMPPSETTSSKTTMPPSET) shows a compositional bias: low complexity. Residues 141–157 (ATSETMPPPSQTALTHN) are compositionally biased toward polar residues.

It belongs to the beta-defensin family.

The protein resides in the secreted. Has antibacterial activity. This Pongo pygmaeus (Bornean orangutan) protein is Beta-defensin 125 (DEFB125).